A 347-amino-acid polypeptide reads, in one-letter code: Major capsid protein (347 aa).

Belongs to the baculoviridae major capsid protein family.

The protein localises to the virion. In terms of biological role, most abundant structural protein of the nucleocapsid produced during the infection cycle. The monomers are arranged in stacked rings around the nucleoprotein core. This is Major capsid protein (P39) from Autographa californica nuclear polyhedrosis virus (AcMNPV).